The following is a 253-amino-acid chain: Phosphate import ATP-binding protein PstB (253 aa).

Residues 1–249 (MKLMDVRVSG…PRHELTKKFL (249 aa)) form the ABC transporter domain. Position 38–45 (38–45 (GPSGSGKS)) interacts with ATP.

This sequence belongs to the ABC transporter superfamily. Phosphate importer (TC 3.A.1.7) family. The complex is composed of two ATP-binding proteins (PstB), two transmembrane proteins (PstC and PstA) and a solute-binding protein (PstS).

The protein localises to the cell membrane. It catalyses the reaction phosphate(out) + ATP + H2O = ADP + 2 phosphate(in) + H(+). Functionally, part of the ABC transporter complex PstSACB involved in phosphate import. Responsible for energy coupling to the transport system. In Aeropyrum pernix (strain ATCC 700893 / DSM 11879 / JCM 9820 / NBRC 100138 / K1), this protein is Phosphate import ATP-binding protein PstB.